A 75-amino-acid chain; its full sequence is Defensin J1-1 (75 aa).

The first 27 residues, 1–27, serve as a signal peptide directing secretion; it reads MAGFSKVVATIFLMMLLVFATDMMAEA. Cystine bridges form between cysteine 30–cysteine 74, cysteine 41–cysteine 61, cysteine 47–cysteine 68, and cysteine 51–cysteine 70.

The protein belongs to the DEFL family. In terms of assembly, monomer. Expressed in orange and red ripe fruit and to a lesser extent in mature, green fruit. Present in trace in young, green fruit.

It localises to the secreted. Plant defense peptide with antifungal activity against F.oxysporum and B.cinerea. The chain is Defensin J1-1 from Capsicum annuum (Capsicum pepper).